Here is an 83-residue protein sequence, read N- to C-terminus: Apolipoprotein C-I (83 aa).

The signal sequence occupies residues 1–26 (MRLILSLPVLAVVLAMVLEGPAPAQA).

This sequence belongs to the apolipoprotein C1 family.

The protein localises to the secreted. Functionally, inhibitor of lipoprotein binding to the low density lipoprotein (LDL) receptor, LDL receptor-related protein, and very low density lipoprotein (VLDL) receptor. Associates with high density lipoproteins (HDL) and the triacylglycerol-rich lipoproteins in the plasma and makes up about 10% of the protein of the VLDL and 2% of that of HDL. Appears to interfere directly with fatty acid uptake and is also the major plasma inhibitor of cholesteryl ester transfer protein (CETP). Binds free fatty acids and reduces their intracellular esterification. Modulates the interaction of APOE with beta-migrating VLDL and inhibits binding of beta-VLDL to the LDL receptor-related protein. This is Apolipoprotein C-I (APOC1) from Rousettus aegyptiacus (Egyptian fruit bat).